Consider the following 172-residue polypeptide: WW domain binding protein VOPP1 (172 aa).

Residues 1–22 (MGRRLGRVAALLLGLLVECTEA) form the signal peptide. Over 23–60 (KKHCWYFEGLYPTYYICRSYEDCCGSRCCVRALSIQRL) the chain is Extracellular. A helical membrane pass occupies residues 61–81 (WYFWFLLMMGVLFCCGAGFFI). Over 82 to 172 (RRRMYPPPLI…PPYEQVVKDK (91 aa)) the chain is Cytoplasmic. The tract at residues 139–172 (QVQPNSPHGGTTYPPPPSYCNTPPPPYEQVVKDK) is disordered. Residues 151–165 (YPPPPSYCNTPPPPY) are compositionally biased toward pro residues.

Belongs to the VOPP1/ECOP family. As to quaternary structure, interacts with WWOX (via WW domain).

The protein localises to the cytoplasmic vesicle membrane. The protein resides in the late endosome membrane. Its subcellular location is the lysosome membrane. Functionally, increases the transcriptional activity of NFKB1 by facilitating its nuclear translocation, DNA-binding and associated apoptotic response, when overexpressed. May sequester WWOX in lysosomal vesicles and thereby regulate WWOX role as tumor suppressor. This chain is WW domain binding protein VOPP1 (Vopp1), found in Mus musculus (Mouse).